Reading from the N-terminus, the 706-residue chain is MKIFSESHKTVFVVDHCPYMAESCRQHVEFDMLVKNRTQGIIPLAPISKSLWTCSVESSMEYCRIMYDIFPFKKLVNFIVSDSGAHVLNSWTQEDQNLQELMAALAAVGPPNPRADPECCSILHGLVAAVETLCKITEYQHEARTLLMENAERVGNRGRIICITNAKSDSHVRMLEDCVQETIHEHNKLAANSDHLMQIQKCELVLIHTYPVGEDSLVSDRSKKELSPVLTSEVHSVRAGRHLATKLNILVQQHFDLASTTITNIPMKEEQHANTSANYDVELLHHKDAHVDFLKSGDSHLGGGSREGSFKETITLKWCTPRTNNIELHYCTGAYRISPVDVNSRPSSCLTNFLLNGRSVLLEQPRKSGSKVISHMLSSHGGEIFLHVLSSSRSILEDPPSISEGCGGRVTDYRITDFGEFMRENRLTPFLDPRYKIDGSLEVPLERAKDQLEKHTRYWPMIISQTTIFNMQAVVPLASVIVKESLTEEDVLNCQKTIYNLVDMERKNDPLPISTVGTRGKGPKRDEQYRIMWNELETLVRAHINNSEKHQRVLECLMACRSKPPEEEERKKRGRKREDKEDKSEKAVKDYEQEKSWQDSERLKGILERGKEELAEAEIIKDSPDSPEPPNKKPLVEMDETPQVEKSKGPVSLLSLWSNRINTANSRKHQEFAGRLNSVNNRAELYQHLKEENGMETTENGKASRQ.

A disordered region spans residues 564-603 (PPEEEERKKRGRKREDKEDKSEKAVKDYEQEKSWQDSERL). A coiled-coil region spans residues 567–622 (EEERKKRGRKREDKEDKSEKAVKDYEQEKSWQDSERLKGILERGKEELAEAEIIKD). The Nuclear localization signal (NLS) motif lies at 572-582 (KRGRKREDKED). Lysine 611 is covalently cross-linked (Glycyl lysine isopeptide (Lys-Gly) (interchain with G-Cter in SUMO2)). Residues 615–636 (AEAEIIKDSPDSPEPPNKKPLV) are compositionally biased toward basic and acidic residues. Residues 615 to 650 (AEAEIIKDSPDSPEPPNKKPLVEMDETPQVEKSKGP) are disordered. Serine 623, serine 626, and serine 678 each carry phosphoserine. A cleavage module binding motif (CMBM) region spans residues 649 to 694 (GPVSLLSLWSNRINTANSRKHQEFAGRLNSVNNRAELYQHLKEENG).

This sequence belongs to the Integrator subunit 13 family. In terms of assembly, component of the Integrator complex, composed of core subunits INTS1, INTS2, INTS3, INTS4, INTS5, INTS6, INTS7, INTS8, INTS9/RC74, INTS10, INTS11/CPSF3L, INTS12, INTS13, INTS14 and INTS15. The core complex associates with protein phosphatase 2A subunits PPP2CA and PPP2R1A, to form the Integrator-PP2A (INTAC) complex. INTS13 is part of the tail subcomplex, composed of INTS10, INTS13, INTS14 and INTS15. Interacts with transcription factors ZNF609 and ZNF655. Interacts with PAFAH1B1; this interaction may be required for proper recruitment of dynein complexes to the nuclear envelope at prophase. In terms of tissue distribution, widely expressed. Tends to be up-regulated in seminomas compared to normal testis.

The protein resides in the nucleus. It is found in the cytoplasm. Component of the integrator complex, a multiprotein complex that terminates RNA polymerase II (Pol II) transcription in the promoter-proximal region of genes. The integrator complex provides a quality checkpoint during transcription elongation by driving premature transcription termination of transcripts that are unfavorably configured for transcriptional elongation: the complex terminates transcription by (1) catalyzing dephosphorylation of the C-terminal domain (CTD) of Pol II subunit POLR2A/RPB1 and SUPT5H/SPT5, (2) degrading the exiting nascent RNA transcript via endonuclease activity and (3) promoting the release of Pol II from bound DNA. The integrator complex is also involved in terminating the synthesis of non-coding Pol II transcripts, such as enhancer RNAs (eRNAs), small nuclear RNAs (snRNAs), telomerase RNAs and long non-coding RNAs (lncRNAs). Within the integrator complex, INTS13 is part of the integrator tail module and acts as a platform for the recruitment of transcription factors at promoters. At prophase, mediates recruitment of cytoplasmic dynein to the nuclear envelope, a step important for proper centrosome-nucleus coupling. At G2/M phase, may be required for proper spindle formation and execution of cytokinesis. This is Integrator complex subunit 13 from Homo sapiens (Human).